The following is a 204-amino-acid chain: Prephenate decarboxylase (204 aa).

The protein belongs to the prephenate decarboxylase family.

It is found in the cytoplasm. It carries out the reaction prephenate + H(+) = 3-[(4R)-4-hydroxycyclohexa-1,5-dien-1-yl]-2-oxopropanoate + CO2. The protein operates within antibiotic biosynthesis; bacilysin biosynthesis. Its function is as follows. Part of the bacABCDEF operon responsible for the biosynthesis of the nonribosomally synthesized dipeptide antibiotic bacilysin, composed of L-alanine and L-anticapsin. Bacilysin is an irreversible inactivator of the glutaminase domain of glucosamine synthetase. BacA is an unusual prephenate decarboxylase that avoids the typical aromatization of the cyclohexadienol ring of prephenate. BacA catalyzes the protonation of prephenate (1-carboxy-4-hydroxy-alpha-oxo-2,5-cyclohexadiene-1-propanoic acid) at C6 position, followed by a decarboxylation to produce the endocyclic-delta(4),delta(8)-7R-dihydro-hydroxyphenylpyruvate (en-H2HPP). En-H2HPP is able to undergo a slow nonenzymatic isomerization to produce the exocyclic-delta(3),delta(5)-dihydro-hydroxyphenylpyruvate (ex-H2HPP). BacA isomerizes only the pro-R double bond in prephenate. In Bacillus amyloliquefaciens (Bacillus velezensis), this protein is Prephenate decarboxylase.